We begin with the raw amino-acid sequence, 3748 residues long: Intermembrane lipid transfer protein VPS13C (3748 aa).

The Chorein N-terminal domain maps to 3–115 (LESVVADLLN…SLQDIKQKEL (113 aa)). Phosphoserine is present on Ser-132. Position 613 is a phosphothreonine (Thr-613). Ser-618 carries the post-translational modification Phosphoserine. Position 623 is a phosphothreonine (Thr-623). A phosphoserine mark is found at Ser-736, Ser-841, Ser-871, and Ser-873. An FFAT motif is present at residues 876 to 882 (EFFDAED). Phosphothreonine is present on Thr-1968. Phosphoserine is present on residues Ser-1974 and Ser-2442. A required for late endosome/lysosome localization region spans residues 2410–3304 (DYSLKDRAPF…IQQDIDALNT (895 aa)). The 253-residue stretch at 2760–3012 (ELSVFSPYWL…LFAWADPTGI (253 aa)) folds into the SHR-BD domain. The required for lipid droplet localization stretch occupies residues 3305 to 3748 (ELMESSMTDM…VKLLRPQGPS (444 aa)). Residues Arg-3514 and Arg-3521 each carry the omega-N-methylarginine modification. Lys-3533 is modified (N6-acetyllysine).

The protein belongs to the VPS13 family.

Its subcellular location is the mitochondrion outer membrane. It is found in the lipid droplet. The protein resides in the endoplasmic reticulum membrane. It localises to the lysosome membrane. The protein localises to the late endosome membrane. Functionally, mediates the transfer of lipids between membranes at organelle contact sites. Necessary for proper mitochondrial function and maintenance of mitochondrial transmembrane potential. Involved in the regulation of PINK1/PRKN-mediated mitophagy in response to mitochondrial depolarization. This Mus musculus (Mouse) protein is Intermembrane lipid transfer protein VPS13C.